We begin with the raw amino-acid sequence, 652 residues long: Phosphomethylpyrimidine synthase (652 aa).

Disordered stretches follow at residues 1 to 45 (MVSR…SVSA) and 118 to 166 (QRGD…LDGR). Residues 8–45 (SSSSTSKAVTSSPSTSSLSSAASSPSVSSSSSSSSVSA) are compositionally biased toward low complexity. Over residues 134–162 (GASGPGTLGSGTPGSGTPGSGPLGLGGTD) the composition is skewed to gly residues. Substrate contacts are provided by residues asparagine 245, methionine 274, tyrosine 303, histidine 339, 359 to 361 (SRG), 400 to 403 (DGLR), and glutamate 439. Residue histidine 443 coordinates Zn(2+). A substrate-binding site is contributed by tyrosine 466. Histidine 507 lines the Zn(2+) pocket. 3 residues coordinate [4Fe-4S] cluster: cysteine 587, cysteine 590, and cysteine 595.

The protein belongs to the ThiC family. The cofactor is [4Fe-4S] cluster.

The enzyme catalyses 5-amino-1-(5-phospho-beta-D-ribosyl)imidazole + S-adenosyl-L-methionine = 4-amino-2-methyl-5-(phosphooxymethyl)pyrimidine + CO + 5'-deoxyadenosine + formate + L-methionine + 3 H(+). It participates in cofactor biosynthesis; thiamine diphosphate biosynthesis. Its function is as follows. Catalyzes the synthesis of the hydroxymethylpyrimidine phosphate (HMP-P) moiety of thiamine from aminoimidazole ribotide (AIR) in a radical S-adenosyl-L-methionine (SAM)-dependent reaction. The sequence is that of Phosphomethylpyrimidine synthase from Frankia casuarinae (strain DSM 45818 / CECT 9043 / HFP020203 / CcI3).